The primary structure comprises 207 residues: Small ribosomal subunit protein uS4 (207 aa).

Residues Lys-31–Gln-55 form a disordered region. Polar residues predominate over residues Gly-42–Gly-53. Positions Ser-97–Leu-160 constitute an S4 RNA-binding domain.

Belongs to the universal ribosomal protein uS4 family. Part of the 30S ribosomal subunit. Contacts protein S5. The interaction surface between S4 and S5 is involved in control of translational fidelity.

Its function is as follows. One of the primary rRNA binding proteins, it binds directly to 16S rRNA where it nucleates assembly of the body of the 30S subunit. In terms of biological role, with S5 and S12 plays an important role in translational accuracy. In Burkholderia ambifaria (strain MC40-6), this protein is Small ribosomal subunit protein uS4.